The following is a 64-amino-acid chain: Toxin BmCa-1 (64 aa).

The signal sequence occupies residues methionine 1 to alanine 18. Residues glutamate 19–arginine 27 constitute a propeptide that is removed on maturation. Intrachain disulfides connect cysteine 29–cysteine 43, cysteine 36–cysteine 49, and cysteine 42–cysteine 58.

It belongs to the scorpion calcin-like family. As to expression, expressed by the venom gland.

It is found in the secreted. Functionally, may increase intracellular calcium release through the activation of nuclear inositol 1,4,5-trisphosphate receptors (ITPR) of cardiomyocytes, thereby causing an increase in the contraction frequency of these cells. The chain is Toxin BmCa-1 from Olivierus martensii (Manchurian scorpion).